The primary structure comprises 74 residues: MTVTLIIAALYLALAGAYLLVVPAALYLYLQKRWYVASSWERAFMYFLVFFFFPGLLLLAPLLNFRPRSRQIPA.

2 helical membrane-spanning segments follow: residues 5–25 (LIIAALYLALAGAYLLVVPAA) and 43–63 (AFMYFLVFFFFPGLLLLAPLL).

This sequence belongs to the complex I NdhL subunit family. In terms of assembly, NDH-1 can be composed of about 15 different subunits; different subcomplexes with different compositions have been identified which probably have different functions.

It is found in the cellular thylakoid membrane. The enzyme catalyses a plastoquinone + NADH + (n+1) H(+)(in) = a plastoquinol + NAD(+) + n H(+)(out). The catalysed reaction is a plastoquinone + NADPH + (n+1) H(+)(in) = a plastoquinol + NADP(+) + n H(+)(out). Its function is as follows. NDH-1 shuttles electrons from an unknown electron donor, via FMN and iron-sulfur (Fe-S) centers, to quinones in the respiratory and/or the photosynthetic chain. The immediate electron acceptor for the enzyme in this species is believed to be plastoquinone. Couples the redox reaction to proton translocation, and thus conserves the redox energy in a proton gradient. Cyanobacterial NDH-1 also plays a role in inorganic carbon-concentration. This is NAD(P)H-quinone oxidoreductase subunit L from Synechococcus elongatus (strain ATCC 33912 / PCC 7942 / FACHB-805) (Anacystis nidulans R2).